A 337-amino-acid chain; its full sequence is Glucokinase (337 aa).

Residue 11-16 (ADIGGT) coordinates ATP.

Belongs to the bacterial glucokinase family.

The protein localises to the cytoplasm. It catalyses the reaction D-glucose + ATP = D-glucose 6-phosphate + ADP + H(+). This Xylella fastidiosa (strain 9a5c) protein is Glucokinase.